The following is an 81-amino-acid chain: Defensin-like protein 144 (81 aa).

The first 24 residues, 1 to 24 (MKNSFRFSFTVITTFIICVLVSGA), serve as a signal peptide directing secretion. Cystine bridges form between cysteine 30/cysteine 74, cysteine 42/cysteine 61, cysteine 47/cysteine 69, and cysteine 51/cysteine 71.

The protein belongs to the DEFL family.

Its subcellular location is the secreted. The polypeptide is Defensin-like protein 144 (LCR10) (Arabidopsis thaliana (Mouse-ear cress)).